The sequence spans 818 residues: H(+)/Cl(-) exchange transporter 3 (818 aa).

The Cytoplasmic portion of the chain corresponds to 1-125 (MESEQLFHRG…WEMTKSLYDA (125 aa)). The Di-leucine internalization motif; mediates targeting to late endosome and lysosome membranes signature appears at 13 to 17 (RNSYN). The short motif at 18-19 (SI) is the IP motif; mediates targeting to recycling endosomes element. Short sequence motifs (di-leucine internalization motif; mediates targeting to late endosome and lysosome membranes) lie at residues 28-29 (LL), 46-47 (LL), and 71-75 (LLDLL). A helical membrane pass occupies residues 126 to 163 (WSGWLVVTLTGLASGALAGLIDIAADWMTDLKEGICLS). N-linked (GlcNAc...) asparagine glycosylation is present at N177. A helical transmembrane segment spans residues 209-232 (MNYIMYIFWALSFAFLAVSLVKVF). Positions 238–242 (GSGIP) match the Selectivity filter part_1 motif. S239 contributes to the chloride binding site. The helical intramembrane region spans 241-248 (IPEIKTIL). The next 2 helical transmembrane spans lie at 258–276 (GKWTLMIKTITLVLAVASG) and 282–301 (EGPLVHVACCCGNIFSYLFP). Residues 280–284 (GKEGP) carry the Selectivity filter part_2 motif. Intramembrane regions (helical) lie at residues 313–325 (VLSAASAAGVSVA) and 329–337 (PIGGVLFSL). A run of 3 helical transmembrane segments spans residues 349 to 367 (LWRSFFAALVAAFVLRSIN), 391 to 416 (FPFILLGVFGGLWGAFFIRANIAWCR), and 423 to 443 (FGKYPVLEVIIVAAITAVIAF). Residues N451 and N479 are each glycosylated (N-linked (GlcNAc...) asparagine). The next 2 membrane-spanning stretches (helical) occupy residues 500 to 520 (IWQLCLALIFKIIMTVFTFGI) and 525 to 544 (GLFIPSMAIGAIAGRIVGIA). A Selectivity filter part_3 motif is present at residues 525 to 529 (GLFIP). F527 contacts chloride. Intramembrane regions (helical) lie at residues 572 to 586 (GLYAMVGAAACLGGV) and 590 to 601 (TVSLVVIVFELT). Residues 602–605 (GGLE) constitute an intramembrane region (note=Loop between two helices). The chain crosses the membrane as a helical span at residues 606–624 (YIVPLMAAVMTSKWVGDAF). Residues 625–818 (GREGIYEAHI…NQDPASIMFN (194 aa)) are Cytoplasmic-facing. Position 630 (Y630) interacts with chloride. 2 consecutive CBS domains span residues 658–722 (MRPR…ARKK) and 755–812 (LDMS…NQDP). ATP-binding positions include 689–691 (YNG) and 796–799 (TKKD).

It belongs to the chloride channel (TC 2.A.49) family. ClC-3/CLCN3 subfamily. In terms of assembly, monomer and homodimer. Forms heterodimers with CLCN4. In terms of processing, N-glycosylated. In terms of tissue distribution, detected in kidney, in the apical part of proximal tubule cells (at protein level). Expressed at high levels in the kidney while a low level expression is seen in the brain. Within the brain, it is prominent in the hippocampus, cerebral cortex and olfactory bulb. As to expression, brain, pancreas, kidney, liver, lung, retina, olfactory bulb, and spinal cord. Pancreas, kidney, liver, lung and retina. In terms of tissue distribution, brain, heart, pancreas, kidney, liver, lung, retina, olfactory bulb, and spinal cord. As to expression, expressed at high levels in the liver and at low levels in the brain.

It localises to the cytoplasmic vesicle. The protein resides in the secretory vesicle membrane. It is found in the lysosome membrane. Its subcellular location is the late endosome membrane. The protein localises to the cell membrane. It localises to the early endosome membrane. The protein resides in the recycling endosome membrane. Inhibited by Cd(2+). Functionally, may influence large dense-core vesicle exocytosis in adrenal chromaffin cells. In terms of biological role, strongly outwardly rectifying, electrogenic H(+)/Cl(-)exchanger which mediates the exchange of chloride ions against protons. The CLC channel family contains both chloride channels and proton-coupled anion transporters that exchange chloride or another anion for protons. The presence of conserved gating glutamate residues is typical for family members that function as antiporters. Its function is as follows. Strongly outwardly rectifying, electrogenic H(+)/Cl(-)exchanger which mediates the exchange of chloride ions against protons. Facilitates endosomal acidification and chloride accumulation in hepatocytes. Strongly outwardly rectifying, electrogenic H(+)/Cl(-)exchanger which mediates the exchange of chloride ions against protons. The sequence is that of H(+)/Cl(-) exchange transporter 3 (Clcn3) from Mus musculus (Mouse).